Reading from the N-terminus, the 318-residue chain is Rhomboid-related protein 4 (318 aa).

The Cytoplasmic segment spans residues 1–21 (MQRRSRGINTGLILLLSQIFH). A helical transmembrane segment spans residues 22–42 (VGINNIPPVTLATLALNIWFF). The Extracellular segment spans residues 43-106 (LNPQKPLYSS…RRLGSRWFAY (64 aa)). The helical transmembrane segment at 107–127 (VITTFSVLTGVVYLLLQFAVA) threads the bilayer. Topologically, residues 128–137 (EFMDEPDFKR) are cytoplasmic. Residues 138–154 (SCAVGFSGVLFALKVLN) form a helical membrane-spanning segment. Serine 144 functions as the Nucleophile in the catalytic mechanism. Residues 155–179 (NHYCPGGFVNILGFPVPNRFACWVE) are Extracellular-facing. A helical transmembrane segment spans residues 180-204 (LVAIHLFSPGTSFAGHQAGILVGLM). Residue histidine 195 is part of the active site. The Cytoplasmic portion of the chain corresponds to 205-318 (YTQGPLKKIM…RQRLHRFDSQ (114 aa)). Residues 271–286 (SEEEQLERALQASLWD) form a ubiquitin-binding domain (UBD) region. The segment at 285-318 (WDRGHTRNSPPPYGFHLSPEEEMRRQRLHRFDSQ) is disordered. Positions 302–318 (SPEEEMRRQRLHRFDSQ) are enriched in basic and acidic residues. A VCP/p97-interacting motif (VIM) region spans residues 303–318 (PEEEMRRQRLHRFDSQ).

Belongs to the peptidase S54 family. In terms of assembly, interacts with BIK and STEAP3. Interacts (via C-terminal domain) with VCP. Interacts with ubiquitin and ubiquitinated proteins.

Its subcellular location is the endoplasmic reticulum membrane. It is found in the mitochondrion membrane. The catalysed reaction is Cleaves type-1 transmembrane domains using a catalytic dyad composed of serine and histidine that are contributed by different transmembrane domains.. Inhibited by aprotinin. Intramembrane-cleaving serine protease that cleaves single transmembrane or multi-pass membrane proteins in the hydrophobic plane of the membrane, luminal loops and juxtamembrane regions. Involved in regulated intramembrane proteolysis and the subsequent release of functional polypeptides from their membrane anchors. Functional component of endoplasmic reticulum-associated degradation (ERAD) for misfolded membrane proteins. Required for the degradation process of some specific misfolded endoplasmic reticulum (ER) luminal proteins. Participates in the transfer of misfolded proteins from the ER to the cytosol, where they are destroyed by the proteasome in a ubiquitin-dependent manner. Functions in BIK, MPZ, PKD1, PTCRA, RHO, STEAP3 and TRAC processing. Involved in the regulation of exosomal secretion; inhibits the TSAP6-mediated secretion pathway. Involved in the regulation of apoptosis; modulates BIK-mediated apoptotic activity. Also plays a role in the regulation of spermatogenesis; inhibits apoptotic activity in spermatogonia. The chain is Rhomboid-related protein 4 (RHBDD1) from Pongo abelii (Sumatran orangutan).